We begin with the raw amino-acid sequence, 305 residues long: 2-oxoacid:ferredoxin oxidoreductase subunit beta (305 aa).

[4Fe-4S] cluster is bound by residues cysteine 12, cysteine 15, and cysteine 46. Thiamine diphosphate contacts are provided by residues isoleucine 44–serine 47 and histidine 65. Residue aspartate 90 coordinates Mg(2+). Glycine 91–aspartate 92 provides a ligand contact to thiamine diphosphate. Mg(2+) is bound by residues asparagine 118 and valine 120. Glycine 122–leucine 123 is a binding site for thiamine diphosphate. Position 197 (cysteine 197) interacts with [4Fe-4S] cluster.

In terms of assembly, heterodimer composed of an alpha and a beta subunit. It depends on [4Fe-4S] cluster as a cofactor. The cofactor is thiamine diphosphate. Mg(2+) serves as cofactor.

The enzyme catalyses a 2-oxocarboxylate + 2 oxidized [2Fe-2S]-[ferredoxin] + CoA = an acyl-CoA + 2 reduced [2Fe-2S]-[ferredoxin] + CO2 + H(+). In terms of biological role, catalyzes the coenzyme A-dependent oxidative decarboxylation of different 2-oxoacids such as 2-oxoglutarate, pyruvate and 2-oxobutyrate to form their CoA derivatives. This Saccharolobus solfataricus (Sulfolobus solfataricus) protein is 2-oxoacid:ferredoxin oxidoreductase subunit beta.